The chain runs to 227 residues: Large ribosomal subunit protein bL25 (227 aa).

The interval 199 to 227 (AIAEAQSAEAAEEKAEESAEDEKKDGEEA) is disordered. The span at 209–227 (AEEKAEESAEDEKKDGEEA) shows a compositional bias: basic and acidic residues.

Belongs to the bacterial ribosomal protein bL25 family. CTC subfamily. As to quaternary structure, part of the 50S ribosomal subunit; part of the 5S rRNA/L5/L18/L25 subcomplex. Contacts the 5S rRNA. Binds to the 5S rRNA independently of L5 and L18.

Functionally, this is one of the proteins that binds to the 5S RNA in the ribosome where it forms part of the central protuberance. This chain is Large ribosomal subunit protein bL25, found in Methylobacterium radiotolerans (strain ATCC 27329 / DSM 1819 / JCM 2831 / NBRC 15690 / NCIMB 10815 / 0-1).